Consider the following 114-residue polypeptide: Probable 4-amino-4-deoxy-L-arabinose-phosphoundecaprenol flippase subunit ArnE (114 aa).

A run of 2 helical transmembrane segments spans residues 41-61 (GWLW…LLVL) and 68-88 (VAYP…HFVF). The 70-residue stretch at 43-112 (LWLALFSLGL…VIGGVLLLSR (70 aa)) folds into the EamA domain.

Belongs to the ArnE family. Heterodimer of ArnE and ArnF.

The protein localises to the cell inner membrane. Its pathway is bacterial outer membrane biogenesis; lipopolysaccharide biosynthesis. Translocates 4-amino-4-deoxy-L-arabinose-phosphoundecaprenol (alpha-L-Ara4N-phosphoundecaprenol) from the cytoplasmic to the periplasmic side of the inner membrane. The chain is Probable 4-amino-4-deoxy-L-arabinose-phosphoundecaprenol flippase subunit ArnE from Pseudomonas fluorescens (strain ATCC BAA-477 / NRRL B-23932 / Pf-5).